The chain runs to 184 residues: Ferredoxin-thioredoxin reductase subunit A2, chloroplastic (184 aa).

A chloroplast-targeting transit peptide spans Met-1 to Arg-71.

This sequence belongs to the ferredoxin thioredoxin reductase alpha subunit family. In terms of assembly, heterodimer of subunit A (variable subunit) and subunit B (catalytic subunit). Heterodimeric FTR forms a complex with ferredoxin and thioredoxin.

The protein resides in the plastid. It is found in the chloroplast. Its function is as follows. Variable subunit of the ferredoxin-thioredoxin reductase (FTR), which catalyzes the two-electron reduction of thioredoxins by the electrons provided by reduced ferredoxin. This Arabidopsis thaliana (Mouse-ear cress) protein is Ferredoxin-thioredoxin reductase subunit A2, chloroplastic.